A 418-amino-acid chain; its full sequence is RapA guanosine triphosphatase-activating protein B (418 aa).

The 266-residue stretch at 142–407 (LVKVCEPEFN…EKASALINVI (266 aa)) folds into the Rap-GAP domain. A disordered region spans residues 304-339 (NRVVGEQPSPSLTTTTTTTTTTSPTINSNSPTPSNK). The segment covering 311–338 (PSPSLTTTTTTTTTTSPTINSNSPTPSN) has biased composition (low complexity).

Mediates the deactivation of rap1 during multicellular development and is required for normal morphogenesis. Also required for the correct patterning of specific subtypes of prestalk cells. The protein is RapA guanosine triphosphatase-activating protein B (rapgapB) of Dictyostelium discoideum (Social amoeba).